A 165-amino-acid polypeptide reads, in one-letter code: MEKETKEKIEKTVIEILSESDMKEITEFKVRKLASEKLAIDLSEKSHKAFVRSVVEKFLDEERAREYENSQVNKEEEDGDKDCGKGNKEFDDDGDLIICRLSDKRRVTIQEFKGKSLVSIREYYKKDGKELPTSKGISLTDEQWSTFKKNMPAIENAVKKMESRV.

The region spanning 3–60 (KETKEKIEKTVIEILSESDMKEITEFKVRKLASEKLAIDLSEKSHKAFVRSVVEKFLD) is the DEK-C domain. The tract at residues 66–93 (EYENSQVNKEEEDGDKDCGKGNKEFDDD) is disordered.

The protein belongs to the transcriptional coactivator PC4 family.

It is found in the nucleus. In terms of biological role, general coactivator that functions cooperatively with TAFs and mediates functional interactions between upstream activators and the general transcriptional machinery. Binds single-stranded DNA. This is RNA polymerase II transcriptional coactivator KELP (KELP) from Arabidopsis thaliana (Mouse-ear cress).